The primary structure comprises 464 residues: Argininosuccinate lyase (464 aa).

The protein belongs to the lyase 1 family. Argininosuccinate lyase subfamily.

It localises to the cytoplasm. The enzyme catalyses 2-(N(omega)-L-arginino)succinate = fumarate + L-arginine. Its pathway is amino-acid biosynthesis; L-arginine biosynthesis; L-arginine from L-ornithine and carbamoyl phosphate: step 3/3. The polypeptide is Argininosuccinate lyase (Alcanivorax borkumensis (strain ATCC 700651 / DSM 11573 / NCIMB 13689 / SK2)).